A 470-amino-acid chain; its full sequence is Putative multidrug resistance protein MdtD (470 aa).

The Periplasmic segment spans residues Met1–Gln11. Residues Leu12–Ala32 form a helical membrane-spanning segment. Over Leu33–His48 the chain is Cytoplasmic. The helical transmembrane segment at Met49–Ala69 threads the bilayer. Over Asp70–Asn76 the chain is Periplasmic. The helical transmembrane segment at Ile77 to Thr97 threads the bilayer. Residues Leu98–Leu101 lie on the Cytoplasmic side of the membrane. A helical membrane pass occupies residues Val102–Met124. Topologically, residues Lys125–Thr137 are periplasmic. A helical transmembrane segment spans residues Phe138–Val158. At Glu159–His164 the chain is on the cytoplasmic side. A helical transmembrane segment spans residues Trp165 to Met185. The Periplasmic portion of the chain corresponds to Pro186 to Asp196. A helical transmembrane segment spans residues Leu197–Ser217. Residues Lys218–Pro224 are Cytoplasmic-facing. A helical membrane pass occupies residues Trp225–Ala245. Topologically, residues Lys246 to Thr262 are periplasmic. Residues Phe263–Met283 form a helical membrane-spanning segment. The Cytoplasmic segment spans residues Thr284–Pro285. Residues Val286–Met306 form a helical membrane-spanning segment. Topologically, residues Val307 to Ser341 are periplasmic. The chain crosses the membrane as a helical span at residues Leu342–Leu362. Residues Gln363 to Ser395 lie on the Cytoplasmic side of the membrane. Residues Met396–Phe416 traverse the membrane as a helical segment. At Gly417–His430 the chain is on the periplasmic side. Residues Val431–Ala451 traverse the membrane as a helical segment. At Arg452 to Leu470 the chain is on the cytoplasmic side.

It belongs to the major facilitator superfamily. TCR/Tet family.

It localises to the cell inner membrane. The chain is Putative multidrug resistance protein MdtD from Salmonella agona (strain SL483).